We begin with the raw amino-acid sequence, 389 residues long: LL-diaminopimelate aminotransferase (389 aa).

Substrate contacts are provided by Tyr16 and Gly41. Pyridoxal 5'-phosphate is bound by residues Tyr70, 104 to 105 (SK), Tyr129, Asn179, Tyr210, and 239 to 241 (SLS). Substrate is bound by residues Lys105, Tyr129, and Asn179. The residue at position 242 (Lys242) is an N6-(pyridoxal phosphate)lysine. Pyridoxal 5'-phosphate is bound at residue Arg250. Arg369 is a substrate binding site.

It belongs to the class-I pyridoxal-phosphate-dependent aminotransferase family. LL-diaminopimelate aminotransferase subfamily. As to quaternary structure, homodimer. Requires pyridoxal 5'-phosphate as cofactor.

The catalysed reaction is (2S,6S)-2,6-diaminopimelate + 2-oxoglutarate = (S)-2,3,4,5-tetrahydrodipicolinate + L-glutamate + H2O + H(+). It participates in amino-acid biosynthesis; L-lysine biosynthesis via DAP pathway; LL-2,6-diaminopimelate from (S)-tetrahydrodipicolinate (aminotransferase route): step 1/1. In terms of biological role, involved in the synthesis of meso-diaminopimelate (m-DAP or DL-DAP), required for both lysine and peptidoglycan biosynthesis. Catalyzes the direct conversion of tetrahydrodipicolinate to LL-diaminopimelate. This chain is LL-diaminopimelate aminotransferase, found in Nitratidesulfovibrio vulgaris (strain DSM 19637 / Miyazaki F) (Desulfovibrio vulgaris).